Consider the following 333-residue polypeptide: Dipeptide transport system permease protein DppB (333 aa).

6 consecutive transmembrane segments (helical) span residues 9-29 (ILMVIPTFIAITLITFALVHF), 103-123 (AFFALFWSLLGGIILGTIAAV), 136-156 (ASLTGYSMPIFWWGLILILYV), 197-217 (AVKSLILPAIVLGTVPLAIIT), 256-276 (LIPVVTVVGLIVAQLLSGAVL), and 306-326 (VLIIATIIIVVNLTVDLLYGV). An ABC transmembrane type-1 domain is found at 96-328 (FPATAELAFF…TVDLLYGVVN (233 aa)).

This sequence belongs to the binding-protein-dependent transport system permease family. OppBC subfamily.

The protein resides in the cell inner membrane. Its function is as follows. Part of the ABC transporter DppBCDF involved in dipeptide transport. Responsible for the translocation of the substrate across the membrane. This is Dipeptide transport system permease protein DppB (dppB) from Haemophilus influenzae (strain ATCC 51907 / DSM 11121 / KW20 / Rd).